The primary structure comprises 749 residues: Serine/threonine-protein phosphatase 4 regulatory subunit 3 (749 aa).

In terms of assembly, regulatory subunit 3 (R3) of the histone H2A phosphatase complex (HTP-C) consisting of PPH3, PSY2 and PSY4.

It localises to the nucleus. Core regulatory subunit of the histone H2A phosphatase complex, which dephosphorylates H2AS128ph (gamma-H2A) that has been displaced from sites of DNA lesions in the double-stranded DNA break repair process. Dephosphorylation is necessary for efficient recovery from the DNA damage checkpoint. The chain is Serine/threonine-protein phosphatase 4 regulatory subunit 3 (PSY2) from Kluyveromyces lactis (strain ATCC 8585 / CBS 2359 / DSM 70799 / NBRC 1267 / NRRL Y-1140 / WM37) (Yeast).